Reading from the N-terminus, the 275-residue chain is Homeobox-leucine zipper protein ATHB-17 (275 aa).

The tract at residues 95–143 is disordered; that stretch reads SSPLSDEGSGGGRDQLRLDMNRLPSSEDGDDEEFSHDDGSAPPRKKLRL. A DNA-binding region (homeobox) is located at residues 136-195; it reads PPRKKLRLTREQSRLLEDSFRQNHTLNPKQKEVLAKHLMLRPRQIEVWFQNRRARSKLKQ. Positions 203 to 224 are leucine-zipper; the sequence is LKRWFGSLTEENHRLHREVEEL. Residues 252–275 are disordered; sequence AASPSRAVVPVPAKKTFPPQERDR.

Belongs to the HD-ZIP homeobox family. Class II subfamily.

The protein resides in the nucleus. In terms of biological role, probable transcription factor. This Arabidopsis thaliana (Mouse-ear cress) protein is Homeobox-leucine zipper protein ATHB-17 (ATHB-17).